A 467-amino-acid polypeptide reads, in one-letter code: Constitutive acid phosphatase (467 aa).

The first 17 residues, 1–17, serve as a signal peptide directing secretion; the sequence is MFKSVVYSVLAAALVNA. Histidine 75 acts as the Nucleophile in catalysis. N-linked (GlcNAc...) asparagine glycans are attached at residues asparagine 97, asparagine 103, asparagine 162, asparagine 192, asparagine 250, and asparagine 315. Residue aspartate 338 is the Proton donor of the active site. 6 N-linked (GlcNAc...) asparagine glycosylation sites follow: asparagine 356, asparagine 390, asparagine 439, asparagine 445, asparagine 456, and asparagine 461.

Belongs to the histidine acid phosphatase family.

It carries out the reaction a phosphate monoester + H2O = an alcohol + phosphate. The protein is Constitutive acid phosphatase (PHO3) of Saccharomyces cerevisiae (strain ATCC 204508 / S288c) (Baker's yeast).